The sequence spans 1321 residues: Bile salt export pump (1321 aa).

The Cytoplasmic portion of the chain corresponds to 1–62 (MSDSVILRSV…FSSSKDNWLM (62 aa)). Residues 62–385 (MFMGSVCALL…ASSCLEIFST (324 aa)) form the ABC transmembrane type-1 1 domain. Residues 63 to 83 (FMGSVCALLHGMAQPGMIIVF) traverse the membrane as a helical segment. Residues 84-147 (GILTDIFVEY…VIKFSGIYAG (64 aa)) lie on the Extracellular side of the membrane. N-linked (GlcNAc...) asparagine glycans are attached at residues Asn-109, Asn-116, Asn-122, and Asn-125. The helical transmembrane segment at 148–168 (VGVAVLILGYFQIRLWVITGA) threads the bilayer. Residues 169–215 (RQIRKMRKFYFRRIMRMEIGWFDCTSVGELNSRFSDDINKIDEAIAD) lie on the Cytoplasmic side of the membrane. The chain crosses the membrane as a helical span at residues 216 to 236 (QMALFLQRLSTALSGLLLGFY). Residues 237 to 240 (RGWK) are Extracellular-facing. Residues 241–261 (LTLVILAVSPLIGIGAAVIGL) form a helical membrane-spanning segment. The Cytoplasmic portion of the chain corresponds to 262-319 (SVAKFTELELKAYAKAGSIADEVLSSIRTVAAFGGENKEVERYEKNLMFAQRWGIWKG). A helical membrane pass occupies residues 320-340 (MVMGFFTGYMWCLIFFCYALA). The Extracellular portion of the chain corresponds to 341-353 (FWYGSRLVLDEGE). Residues 354–374 (YTPGTLIQIFLCVIIAAMNIG) traverse the membrane as a helical segment. At 375 to 755 (NASSCLEIFS…KYNISEWPYI (381 aa)) the chain is on the cytoplasmic side. The ABC transporter 1 domain maps to 420 to 656 (IEFHNVTFHY…KGVYFMLVTL (237 aa)). Residue 455–462 (GSSGAGKS) coordinates ATP. Thr-586 carries the post-translational modification Phosphothreonine. Ser-587 carries the phosphoserine modification. Positions 651 to 674 (FMLVTLQSQEDNTHKETGIKGKDT) are interaction with HAX1. The span at 662–684 (NTHKETGIKGKDTTEGDTPERTF) shows a compositional bias: basic and acidic residues. Positions 662–722 (NTHKETGIKG…PLAIGDHKSS (61 aa)) are disordered. A phosphoserine mark is found at Ser-692, Ser-703, and Ser-706. Residues 755-1043 (ILVGALCAAI…TFSYTPSYAK (289 aa)) enclose the ABC transmembrane type-1 2 domain. Residues 756-776 (LVGALCAAINGAVTPIYSLLF) traverse the membrane as a helical segment. At 777 to 794 (SQILKTFSLVDKEQQRSE) the chain is on the extracellular side. A helical transmembrane segment spans residues 795–815 (IYSMCLFFVILGCVSLFTQFL). Over 816–869 (QGYNFAKSGELLTKRLRKFGFKAMLRQDIGWFDDLKNNPGVLTTRLATDASQVQ) the chain is Cytoplasmic. 2 helical membrane-spanning segments follow: residues 870–890 (GATGSQVGMMVNSFTNIFVAV) and 891–911 (LIAFLFNWKLSLVISVFFPFL). The Cytoplasmic segment spans residues 912–979 (ALSGAVQTKM…SYKTAIRKAN (68 aa)). The helical transmembrane segment at 980–1000 (VYGLCYAFSQGISFLANSAAY) threads the bilayer. The Extracellular segment spans residues 1001–1011 (RYGGYLIVYED). The helical transmembrane segment at 1012-1032 (LNFSYVFRVVSSIAMSATAVG) threads the bilayer. Residues 1033-1321 (RTFSYTPSYA…KLVITGAPIS (289 aa)) lie on the Cytoplasmic side of the membrane. In terms of domain architecture, ABC transporter 2 spans 1078 to 1316 (IDFIDCKFTY…KGAYYKLVIT (239 aa)). 1113–1120 (GSSGCGKS) serves as a coordination point for ATP. Ser-1321 carries the post-translational modification Phosphoserine.

It belongs to the ABC transporter superfamily. ABCB family. Multidrug resistance exporter (TC 3.A.1.201) subfamily. In terms of assembly, interacts with HAX1. Interacts with the adapter protein complex 2 (AP-2) throught AP2A2 or AP2A1; this interaction regulates cell membrane expression of ABCB11 through its internalization in a clathrin-dependent manner and its subsequent degradation. N-glycosylated. Post-translationally, ubiquitinated; short-chain ubiquitination regulates cell-Surface expression of ABCB11. Expressed predominantly, if not exclusively in the liver, where it was further localized to the canalicular microvilli and to subcanalicular vesicles of the hepatocytes by in situ.

Its subcellular location is the apical cell membrane. The protein localises to the recycling endosome membrane. The protein resides in the endosome. It is found in the cell membrane. It catalyses the reaction cholate(in) + ATP + H2O = cholate(out) + ADP + phosphate + H(+). It carries out the reaction taurocholate(in) + ATP + H2O = taurocholate(out) + ADP + phosphate + H(+). The catalysed reaction is glycocholate(in) + ATP + H2O = glycocholate(out) + ADP + phosphate + H(+). The enzyme catalyses glycochenodeoxycholate(in) + ATP + H2O = glycochenodeoxycholate(out) + ADP + phosphate + H(+). It catalyses the reaction taurochenodeoxycholate(in) + ATP + H2O = taurochenodeoxycholate(out) + ADP + phosphate + H(+). It carries out the reaction glycoursodeoxycholate(in) + ATP + H2O = glycoursodeoxycholate(out) + ADP + phosphate + H(+). The catalysed reaction is tauroursodeoxycholate(in) + ATP + H2O = tauroursodeoxycholate(out) + ADP + phosphate + H(+). The enzyme catalyses taurodeoxycholate(in) + ATP + H2O = taurodeoxycholate(out) + ADP + phosphate + H(+). It catalyses the reaction taurolithocholate 3-sulfate(in) + ATP + H2O = taurolithocholate 3-sulfate(out) + ADP + phosphate + H(+). It carries out the reaction pravastatin(in) + ATP + H2O = pravastatin(out) + ADP + phosphate + H(+). With respect to regulation, the uptake of taurocholate is inhibited by taurolithocholate sulfate with an IC(50) of 9 uM. Pravastatin competitively inhibits the transport of taurocholic acid. Cyclosporin A, glibenclamide, rifampicin and troglitazonestrongly competitively inhibit the transport activity of taurocholate. The canalicular transport activity of taurocholate is strongly dependent on canalicular membrane cholesterol content. The uptake of taurocholate is increased by short- and medium-chain fatty acids. Cholesterol increases transport capacity of taurocholate without affecting the affinity for the substrate. Functionally, catalyzes the transport of the major hydrophobic bile salts, such as taurine and glycine-conjugated cholic acid across the canalicular membrane of hepatocytes in an ATP-dependent manner, therefore participates in hepatic bile acid homeostasis and consequently to lipid homeostasis through regulation of biliary lipid secretion in a bile salts dependent manner. Transports taurine-conjugated bile salts more rapidly than glycine-conjugated bile salts. Also transports non-bile acid compounds, such as pravastatin and fexofenadine in an ATP-dependent manner and may be involved in their biliary excretion. In Mus musculus (Mouse), this protein is Bile salt export pump.